The following is a 1447-amino-acid chain: MVTKPSHNLRREHKWLKETATLQEDKDFVFQAIQKHIANKRPKTNSPPTTPSKDECGPGTTNFITSIPASGPTNTATKQHEVMQTLSNDTEWLSYTATSNQYADVPMVDIPASTSVVSNPRTPNGSKTHNFNTFRPHMASSLVENDSSRNLGSRNNNKSVIDNSSIGKQLENDIKLEVIRLQGSLIMALKEQSKLLLQKCSIIESTSLSEDAKRLQLSRDIRPQLSNMSIRIDSLEKEIIKAKKDGMSKDQSKGRSQVSSQDDNIISSILPSPLEYNTSSRNSNLTSTTATTVTKALAITGAKQNITNNTGKNSNNDSNNDDLIQVLDDEDDIDCDPPVILKEGAPHSPAFPHLHMTSEEQDELTRRRNMRSREPVNYRIPDRDDPFDYVMGKSLRDDYPDVEREEDELTMEAEDDAHSSYMTTRDEEKEENELLNQSDFDFVVNDDLDPTQDTDYHDNMDVSANIQESSQEGDTRSTITLSQNKNVQVILSSPTAQSVPSNGQNQIGVEHIDLLEDDLEKDAILDDSMSFSFGRQHMPMSHSDLELIDSEKENEDFEEDNNNNGIEYLSDSDLERFDEERENRTQVADIQELDNDLKIITERKLTGDNEHPPPSWSPKIKREKSSVSQKDEEDDFDDDFSLSDIVSKSNLSSKTNGPTYPWSDEVLYRLHEVFKLPGFRPNQLEAVNATLQGKDVFVLMPTGGGKSLCYQLPAVVKSGKTHGTTIVISPLISLMQDQVEHLLNKNIKASMFSSRGTAEQRRQTFNLFINGLLDLVYISPEMISASEQCKRAISRLYADGKLARIVVDEAHCVSNWGHDFRPDYKELKFFKREYPDIPMIALTATASEQVRMDIIHNLELKEPVFLKQSFNRTNLYYEVNKKTKNTIFEICDAVKSRFKNQTGIIYCHSKKSCEQTSAQMQRNGIKCAYYHAGMEPDERLSVQKAWQADEIQVICATVAFGMGIDKPDVRFVYHFTVPRTLEGYYQETGRAGRDGNYSYCITYFSFRDIRTMQTMIQKDKNLDRENKEKHLNKLQQVMAYCDNVTDCRRKLVLSYFNEDFDSKLCHKNCDNCRNSANVINEERDVTEPAKKIVKLVESIQNERVTIIYCQDVFKGSRSSKIVQANHDTLEEHGIGKSMQKSEIERIFFHLITIRVLQEYSIMNNSGFASSYVKVGPNAKKLLTGKMEIKMQFTISAPNSRPSTSSSFQANEDNIPVIAQKSTTIGGNVAANPPRFISAKEHLRSYTYGGSTMGSSHPITLKNTSDLRSTQELNNLRMTYERLRELSLNLGNRMVPPVGNFMPDSILKKMAAILPMNDSAFATLGTVEDKYRRRFKYFKATIADLSKKRSSEDHEKYDTILNDEFVNRAAASSNGIAQSTGTKSKFFGANLNEAKENEQIINQIRQSQLPKNTTSSKSGTRSISKSSKKSANGRRGFRNYRGHYRGRK.

5 disordered regions span residues 37–78, 243–264, 342–430, 552–572, and 601–639; these read IANK…TATK, KKDGMSKDQSKGRSQVSSQDDN, KEGA…EEKE, KENEDFEEDNNNNGIEYLSDS, and TERKLTGDNEHPPPSWSPKIKREKSSVSQKDEEDDFDDD. Polar residues predominate over residues 59–78; sequence GTTNFITSIPASGPTNTATK. Residues 243-253 show a composition bias toward basic and acidic residues; it reads KKDGMSKDQSK. Positions 254 to 264 are enriched in polar residues; the sequence is GRSQVSSQDDN. Residues 363–386 show a composition bias toward basic and acidic residues; that stretch reads ELTRRRNMRSREPVNYRIPDRDDP. Composition is skewed to acidic residues over residues 403 to 415 and 552 to 561; these read EREEDELTMEAED and KENEDFEEDN. Positions 601–611 are enriched in basic and acidic residues; the sequence is TERKLTGDNEH. The 178-residue stretch at 687–864 folds into the Helicase ATP-binding domain; it reads VNATLQGKDV…IHNLELKEPV (178 aa). An ATP-binding site is contributed by 714–721; the sequence is AVVKSGKT. A DEAH box motif is present at residues 808–811; that stretch reads DEAH. The 150-residue stretch at 886-1035 folds into the Helicase C-terminal domain; that stretch reads TIFEICDAVK…NKEKHLNKLQ (150 aa). The HRDC domain maps to 1272–1351; the sequence is LNNLRMTYER…ADLSKKRSSE (80 aa). Positions 1402–1411 are enriched in polar residues; the sequence is QIRQSQLPKN. The tract at residues 1402–1447 is disordered; sequence QIRQSQLPKNTTSSKSGTRSISKSSKKSANGRRGFRNYRGHYRGRK. The segment covering 1412-1424 has biased composition (low complexity); it reads TTSSKSGTRSISK. A compositionally biased stretch (basic residues) spans 1425-1447; the sequence is SSKKSANGRRGFRNYRGHYRGRK.

This sequence belongs to the helicase family. RecQ subfamily. In terms of assembly, heterodimer with TOP3. Forms a complex with TOP3 and RMI1. Forms a ternary complex with a MLH1-MLH3 heterodimer (MutLbeta) during meiosis. Interacts with TOP2. Requires Mg(2+) as cofactor.

Its subcellular location is the nucleus. It is found in the nucleolus. It catalyses the reaction Couples ATP hydrolysis with the unwinding of duplex DNA by translocating in the 3'-5' direction.. The enzyme catalyses ATP + H2O = ADP + phosphate + H(+). Helicase activity on G-quadruplex DNA is inhibited by ATP-gamma-S. Functionally, ATP-dependent 3'-5' DNA helicase able to unwind duplex DNA or DNA:RNA heteroduplex. Unwinds G-quadruplex DNA; unwinding occurs in the 3'-5' direction, requires a 3' single-stranded end of at least 7 nucleotides. Helicase activity is higher on G-quadruplex substrates than on duplex DNA substrates. Assayed with a catalytic fragment (residues 400-1268). Telomeres and rDNA are notably G-rich; formation of G-quadruplex DNA would block DNA replication and transcription. Acts as an integral component of the S-phase checkpoint response, which arrests cells due to DNA damage or blocked fork progression during DNA replication. Can create a deleterious topological substrate that TOP3 preferentially resolves. The TOP3-SGS1 protein complex may function as a eukaryotic reverse gyrase introducing positive supercoils into extrachromosomal ribosomal DNA rings. Together with topoisomerase II has a role in chromosomal segregation. Maintains rDNA structure where it has a role in re-starting stalled replication forks. The sequence is that of ATP-dependent helicase SGS1 from Saccharomyces cerevisiae (strain ATCC 204508 / S288c) (Baker's yeast).